Here is a 152-residue protein sequence, read N- to C-terminus: Protein Smg homolog (152 aa).

It belongs to the Smg family.

The protein is Protein Smg homolog of Chromobacterium violaceum (strain ATCC 12472 / DSM 30191 / JCM 1249 / CCUG 213 / NBRC 12614 / NCIMB 9131 / NCTC 9757 / MK).